Reading from the N-terminus, the 495-residue chain is MAEKILFYIYRDSGTSSENLVRAIVDEFKNFVFRDRGIAFTSKGYSGIPLLGELPIDSPLDDIWKVVAVLFKISAREEGLIFKVHTTDYEKNPLVAEAKKSDVLPNWAHSVKDFAENVFGMNGVIHLISPTVSEKFPKRSQIDILRAVPNETRNILVTESLSEKLHSSESRNFGMHNTSVNVPVSMAYVARERPDILSLAIREFVKTDERKIKELEKRLANEHDRVMIHTIINDTDWKEVTAVADIESPTDIVSHRVSLALLAFDEKHSSIPNGVDVPVSGLFQKVGDRFEREHLEALRAKLFGSPQSATHLYQCAKSLVTGNHVQECRKIFVDEGSTSNRESDCSGNEDDSSNAKYAKKQVFKKKKRNAFGKKRELAAILDHTKPSEHSEPDYVAPDNSAALKKFERAVNGDDYYKASSDEYSLGEEEDLELFMAKPRKKILEEMKNKNKARLGIKVTERLPTVSDDEEIDVADMLRAAPPIANAEDIEDFDDI.

The tract at residues 337-360 is disordered; that stretch reads STSNRESDCSGNEDDSSNAKYAKK.

This is an uncharacterized protein from Caenorhabditis elegans.